The following is a 124-amino-acid chain: Small ribosomal subunit protein bS6 (124 aa).

Residues 99 to 124 are disordered; it reads PLPAPRIVPGSEPEPVEQQEAAAVEA. The span at 114 to 124 shows a compositional bias: low complexity; the sequence is VEQQEAAAVEA.

This sequence belongs to the bacterial ribosomal protein bS6 family.

In terms of biological role, binds together with bS18 to 16S ribosomal RNA. The sequence is that of Small ribosomal subunit protein bS6 from Prochlorococcus marinus (strain MIT 9303).